A 380-amino-acid polypeptide reads, in one-letter code: MASLPNGAASASASAAGGGPAVVDKEVDFANYFCTYSYLYHQKEMLCDRVRMDAYHSAVFRNAHHFRGKVVLDVGTGSGILAIWSAQAGARKVYAVEATNMAEHARELARANDVADIVEVIQGSMEDVVLPEKVDVIISEWMGYFLLRESMFDSVICARDRWLKPDGVMYPSHARMWLAPIRSDLAENKMEDLEIAMHDWNLFVEDTESYYGVNMNVLTKAYRAEHEKYYLKSAIWNNLHPNQVIGQAAVIKEIDCLTATVDEIREVRAQVTMPIKLDMTRLAALAGWFDVHFRGSKQNPATQEVELSTAPDVNGGTHWGQQVFLLTPPLKVNEGDNVKVSFTMVRSKENHRLMDMEFTYELHESSGKQLPAITTKIYLE.

Residues 26–357 (EVDFANYFCT…KENHRLMDME (332 aa)) enclose the SAM-dependent MTase PRMT-type domain. Gln-42, Arg-51, Gly-75, Glu-97, and Glu-126 together coordinate S-adenosyl-L-methionine. Catalysis depends on residues Glu-140 and Glu-149. Positions 187 to 227 (ENKMEDLEIAMHDWNLFVEDTESYYGVNMNVLTKAYRAEHE) are dimerization arm.

This sequence belongs to the class I-like SAM-binding methyltransferase superfamily. Protein arginine N-methyltransferase family. In terms of assembly, ring-like homodimer.

The catalysed reaction is L-arginyl-[protein] + 2 S-adenosyl-L-methionine = N(omega),N(omega)-dimethyl-L-arginyl-[protein] + 2 S-adenosyl-L-homocysteine + 2 H(+). Functionally, methylates (mono and asymmetric dimethylation) the guanidino nitrogens of arginyl residues in some proteins. In Oryza sativa subsp. japonica (Rice), this protein is Protein arginine N-methyltransferase PRMT10 (PRMT10).